The following is a 42-amino-acid chain: Photosystem I reaction center subunit IX (42 aa).

A helical membrane pass occupies residues 7–27; sequence YLSAAPVLSTLWLGALAGLLI.

Belongs to the PsaJ family.

It is found in the plastid membrane. Its function is as follows. May help in the organization of the PsaE and PsaF subunits. The polypeptide is Photosystem I reaction center subunit IX (Cuscuta exaltata (Tall dodder)).